The chain runs to 307 residues: Nitrogenase iron protein 2 (307 aa).

Residue 13–20 (GKGGIGKS) coordinates ATP. C101 serves as a coordination point for [4Fe-4S] cluster. R104 is modified (ADP-ribosylarginine; by dinitrogenase reductase ADP-ribosyltransferase). Position 135 (C135) interacts with [4Fe-4S] cluster. The segment at 285–307 (QLTETDKAAKESEKKQEDAEGEA) is disordered.

This sequence belongs to the NifH/BchL/ChlL family. Homodimer. [4Fe-4S] cluster is required as a cofactor. The reversible ADP-ribosylation of Arg-104 inactivates the nitrogenase reductase and regulates nitrogenase activity.

The catalysed reaction is N2 + 8 reduced [2Fe-2S]-[ferredoxin] + 16 ATP + 16 H2O = H2 + 8 oxidized [2Fe-2S]-[ferredoxin] + 2 NH4(+) + 16 ADP + 16 phosphate + 6 H(+). Its function is as follows. The key enzymatic reactions in nitrogen fixation are catalyzed by the nitrogenase complex, which has 2 components: the iron protein and the molybdenum-iron protein. This chain is Nitrogenase iron protein 2 (nifH2), found in Mastigocladus laminosus (Fischerella sp.).